Here is a 51-residue protein sequence, read N- to C-terminus: Large ribosomal subunit protein bL33 (51 aa).

The protein belongs to the bacterial ribosomal protein bL33 family.

This chain is Large ribosomal subunit protein bL33, found in Alteromonas mediterranea (strain DSM 17117 / CIP 110805 / LMG 28347 / Deep ecotype).